The following is a 1404-amino-acid chain: DNA-directed RNA polymerase subunit beta' (1404 aa).

4 residues coordinate Zn(2+): Cys-60, Cys-62, Cys-75, and Cys-78. Mg(2+) contacts are provided by Asp-449, Asp-451, and Asp-453. Residues Cys-778, Cys-852, Cys-859, and Cys-862 each coordinate Zn(2+). Positions 1381 to 1404 are disordered; it reads DRPLEEEEEEEIPQSIADDSDGDE. Residues 1384 to 1404 show a composition bias toward acidic residues; sequence LEEEEEEEIPQSIADDSDGDE.

This sequence belongs to the RNA polymerase beta' chain family. The RNAP catalytic core consists of 2 alpha, 1 beta, 1 beta' and 1 omega subunit. When a sigma factor is associated with the core the holoenzyme is formed, which can initiate transcription. Mg(2+) is required as a cofactor. It depends on Zn(2+) as a cofactor.

It catalyses the reaction RNA(n) + a ribonucleoside 5'-triphosphate = RNA(n+1) + diphosphate. Its function is as follows. DNA-dependent RNA polymerase catalyzes the transcription of DNA into RNA using the four ribonucleoside triphosphates as substrates. This Leptospira borgpetersenii serovar Hardjo-bovis (strain L550) protein is DNA-directed RNA polymerase subunit beta'.